Here is a 492-residue protein sequence, read N- to C-terminus: Catalase (492 aa).

Residues His-65 and Asn-138 contribute to the active site. Tyr-348 contacts heme.

It belongs to the catalase family. In terms of assembly, homotetramer. It depends on heme as a cofactor.

The protein resides in the cytoplasm. Its subcellular location is the cytosol. The protein localises to the peroxisome matrix. The enzyme catalyses 2 H2O2 = O2 + 2 H2O. Catalyzes the degradation of hydrogen peroxide (H(2)O(2)) generated by peroxisomal oxidases to water and oxygen, thereby protecting cells from the toxic effects of hydrogen peroxide. The chain is Catalase from Helianthus annuus (Common sunflower).